The chain runs to 176 residues: Transcription factor E (176 aa).

The 85-residue stretch at 5–89 (IDQLMKDMAR…YWKANVDQIN (85 aa)) folds into the HTH TFE/IIEalpha-type domain.

This sequence belongs to the TFE family. As to quaternary structure, monomer. Interaction with RNA polymerase subunits RpoF and RpoE is necessary for Tfe stimulatory transcription activity. Able to interact with Tbp and RNA polymerase in the absence of DNA promoter. Interacts both with the preinitiation and elongation complexes.

Functionally, transcription factor that plays a role in the activation of archaeal genes transcribed by RNA polymerase. Facilitates transcription initiation by enhancing TATA-box recognition by TATA-box-binding protein (Tbp), and transcription factor B (Tfb) and RNA polymerase recruitment. Not absolutely required for transcription in vitro, but particularly important in cases where Tbp or Tfb function is not optimal. It dynamically alters the nucleic acid-binding properties of RNA polymerases by stabilizing the initiation complex and destabilizing elongation complexes. Seems to translocate with the RNA polymerase following initiation and acts by binding to the non template strand of the transcription bubble in elongation complexes. In Metallosphaera sedula (strain ATCC 51363 / DSM 5348 / JCM 9185 / NBRC 15509 / TH2), this protein is Transcription factor E.